The following is a 347-amino-acid chain: Beta-hexosaminidase (347 aa).

Substrate-binding positions include aspartate 62, arginine 70, arginine 134, and 164–165 (KH). The active-site Proton donor/acceptor is the histidine 177. Aspartate 249 serves as the catalytic Nucleophile.

This sequence belongs to the glycosyl hydrolase 3 family. NagZ subfamily.

It is found in the cytoplasm. The enzyme catalyses Hydrolysis of terminal non-reducing N-acetyl-D-hexosamine residues in N-acetyl-beta-D-hexosaminides.. It functions in the pathway cell wall biogenesis; peptidoglycan recycling. Functionally, plays a role in peptidoglycan recycling by cleaving the terminal beta-1,4-linked N-acetylglucosamine (GlcNAc) from peptide-linked peptidoglycan fragments, giving rise to free GlcNAc, anhydro-N-acetylmuramic acid and anhydro-N-acetylmuramic acid-linked peptides. The polypeptide is Beta-hexosaminidase (Mannheimia succiniciproducens (strain KCTC 0769BP / MBEL55E)).